A 1115-amino-acid polypeptide reads, in one-letter code: MTSANFNINGFGDVKLTPYSPLLGYKAWDSFIGSIQSLSDLIYNVDNNRNKMEITVNNAIQAADSFLSSIGRDNKITNTASLLASLDNIFLNLRNVSRDIRETGKFKPNDIQQAIGDIFIAAGDGLQYIKQQTEAMAQSKFLPTKLKTGLNDVLNSRMLKSSTVLQHELNYLGFKIKDYGNERLGESIMNIDDFTPSKIANFFADPDTYSNVLEEVSRFIYSLVPDDANPWKGGEDYIGRGISEWGELLEKWYKQDFLPYLEKEWDQFPKFEDWLPEFPEWAREWLKLDPKRSGKYHVYDPLALDLDGDGIETVAAKGFAGALFDHRNQGIRTATGWVSADDGLLVRDLNGNGIIDNGAELFGDNTKLADGSFAKHGYAALAELDSNGDNIINAADAAFQTLRVWQDLNQDGISQANELRTLEELGIQSLDLAYKDVNKNLGNGNTLAQQGSYTKTDGTTAKMGDLLLAADNLHSRFKDKVELTAEQAKAANLAGIGRLRDLREAAALSGDLANMLKAYSAAETKEAQLALLDNLIHKWAETDSNWGKKSPMRLSTDWTQTANEGIALTPSQVAQLKKNALVSLSDKAKAAIDAARDRIAVLDAYTGQDSSTLYYMSEEDALNIVKVTNDTYDHLAKNIYQNLLFQTRLQPYLNQISFKMENDTFTLDFSGLVQAFNHVKETNPQKAFVDLAEMLAYGELRSWYEGRRLMADYVEEAKKAGKFEDYQKVLGQETVALLAKTSGTQADDILQNVGFGHNKNVSLYGNDGNDTLIGGAGNDYLEGGSGSDTYVFGKGFGQDTVYNYDYATGRKDIIRFTDGITADMLTFTREGNHLLIKAKDDSGQVTVQSYFQNDGSGAYRIDEIHFDNGKVLDVATVKELVQQSTDGSDRLYAYQSGSTLNGGLGDDYLYGADGNDLLNGDAGNDSIYSGNGNDTLDGGEGNDALYGYNGNDALNGGEGNDHLNGEDGNDTLIGGAGNDYLEGGSGSDTYVFGEGFGQDTVYNYHVDKNSDTMHFKGFKAADVHFIRSGSDLVLSASEQDNVRISGFFYGENHRVDTFVFDDAAISNPDFAKYINAGNNLVQSMSVFGSNTAATGGNVDANIQSVQQPLLVTPSA.

Hemolysin-type calcium-binding repeat units follow at residues 755-772 (FGHNKNVSLYGNDGNDTL), 773-790 (IGGAGNDYLEGGSGSDTY), 901-918 (NGGLGDDYLYGADGNDLL), 919-936 (NGDAGNDSIYSGNGNDTL), 937-954 (DGGEGNDALYGYNGNDAL), 955-972 (NGGEGNDHLNGEDGNDTL), and 973-990 (IGGAGNDYLEGGSGSDTY).

This sequence belongs to the RTX prokaryotic toxin (TC 1.C.11) family.

It is found in the cell outer membrane. The protein localises to the secreted. Its function is as follows. May participate in the pathogenesis of meningococcal disease. The polypeptide is Iron-regulated protein FrpA (frpA) (Neisseria meningitidis serogroup C).